Here is a 469-residue protein sequence, read N- to C-terminus: Glutamate--tRNA ligase 1 (469 aa).

Positions 10–20 (PSPTGYLHVGG) match the 'HIGH' region motif. The 'KMSKS' region signature appears at 252–256 (KLSKR). ATP is bound at residue Lys-255.

It belongs to the class-I aminoacyl-tRNA synthetase family. Glutamate--tRNA ligase type 1 subfamily. In terms of assembly, monomer.

The protein resides in the cytoplasm. It catalyses the reaction tRNA(Glu) + L-glutamate + ATP = L-glutamyl-tRNA(Glu) + AMP + diphosphate. Functionally, catalyzes the attachment of glutamate to tRNA(Glu) in a two-step reaction: glutamate is first activated by ATP to form Glu-AMP and then transferred to the acceptor end of tRNA(Glu). In Fervidobacterium nodosum (strain ATCC 35602 / DSM 5306 / Rt17-B1), this protein is Glutamate--tRNA ligase 1.